The sequence spans 902 residues: Ephrin type-B receptor 1-B (902 aa).

An Eph LBD domain is found at 1-119; that stretch reads HRVYVEMRFT…FFKKCPSVVQ (119 aa). Over 1–459 the chain is Extracellular; it reads HRVYVEMRFT…KSELREQLPL (459 aa). 2 consecutive Fibronectin type-III domains span residues 240–350 and 351–448; these read VPSG…TNQA and APSS…TEED. N252, N344, and N398 each carry an N-linked (GlcNAc...) asparagine glycan. Residues 460–480 form a helical membrane-spanning segment; the sequence is IAGSAAAGVVFIVSLVAISIV. Topologically, residues 481-902 are cytoplasmic; that stretch reads CSRKRTYSKE…QISQSPTSIA (422 aa). The 264-residue stretch at 537–800 folds into the Protein kinase domain; it reads VKIEEVIGAG…EIVNTLDKMI (264 aa). Residues 543–551 and K569 each bind ATP; that span reads IGAGEFGEV. The Proton acceptor role is filled by D662. In terms of domain architecture, SAM spans 829-893; sequence SAFTSVDDWL…LNSIQSMRVQ (65 aa). Residues 900-902 carry the PDZ-binding motif; sequence SIA.

This sequence belongs to the protein kinase superfamily. Tyr protein kinase family. Ephrin receptor subfamily. As to quaternary structure, heterotetramer upon binding of the ligand. The heterotetramer is composed of an ephrin dimer and a receptor dimer. Oligomerization is probably required to induce biological responses. Phosphorylated. Autophosphorylation is stimulated by ligands. Expressed in the embryo in the brain and spinal cord and in the first and fourth visceral arches. Most abundant in adult brain, with lower levels in eye, heart, ovary, oviduct, lung and pharynx.

It is found in the cell membrane. Its subcellular location is the early endosome membrane. It localises to the cell projection. The protein localises to the dendrite. The enzyme catalyses L-tyrosyl-[protein] + ATP = O-phospho-L-tyrosyl-[protein] + ADP + H(+). Functionally, receptor tyrosine kinase which binds promiscuously transmembrane ephrin-B family ligands residing on adjacent cells, leading to contact-dependent bidirectional signaling into neighboring cells. The signaling pathway downstream of the receptor is referred to as forward signaling while the signaling pathway downstream of the ephrin ligand is referred to as reverse signaling. May play a role in axon guidance during nervous system development. May also play an important redundant role with other ephrin-B receptors in development and maturation of dendritic spines and synapse formation. More generally, may play a role in targeted cell migration and adhesion. Upon activation by ephrin-B ligands activates the MAPK/ERK and the JNK signaling cascades to regulate cell migration and adhesion respectively. The protein is Ephrin type-B receptor 1-B (ephb1-b) of Xenopus laevis (African clawed frog).